The chain runs to 459 residues: Light-independent protochlorophyllide reductase subunit N (459 aa).

[4Fe-4S] cluster-binding residues include Cys22, Cys47, and Cys107.

Belongs to the BchN/ChlN family. In terms of assembly, protochlorophyllide reductase is composed of three subunits; ChlL, ChlN and ChlB. Forms a heterotetramer of two ChlB and two ChlN subunits. [4Fe-4S] cluster is required as a cofactor.

Its subcellular location is the plastid. The protein resides in the chloroplast. The catalysed reaction is chlorophyllide a + oxidized 2[4Fe-4S]-[ferredoxin] + 2 ADP + 2 phosphate = protochlorophyllide a + reduced 2[4Fe-4S]-[ferredoxin] + 2 ATP + 2 H2O. Its pathway is porphyrin-containing compound metabolism; chlorophyll biosynthesis (light-independent). Component of the dark-operative protochlorophyllide reductase (DPOR) that uses Mg-ATP and reduced ferredoxin to reduce ring D of protochlorophyllide (Pchlide) to form chlorophyllide a (Chlide). This reaction is light-independent. The NB-protein (ChlN-ChlB) is the catalytic component of the complex. The chain is Light-independent protochlorophyllide reductase subunit N from Pinus contorta (Shore pine).